We begin with the raw amino-acid sequence, 225 residues long: MNPIICALDTQDLNEAISLANTLRDKVGMIKLGLEFFAAHGPSGVREVAKCNVPTFLDLKLHDIPNTVAKTVEAIKVLNIEILTLHISGGTKMLEEALSIVKDTKTKLIGVTVLTSMSNEDLSELGIAREVKSQVILFAKLAKKVGLHGIVCSALEAQEVYQECGKDFKIITSGIRVGFGHDDQKRTATPKEAINSGADYIVIGRPITKSNSPANSAELILKSLS.

Residues Asp-9, Lys-31, 58-67 (DLKLHDIPNT), Thr-115, Arg-176, Gln-184, Gly-204, and Arg-205 contribute to the substrate site. The active-site Proton donor is the Lys-60.

Belongs to the OMP decarboxylase family. Type 1 subfamily. In terms of assembly, homodimer.

It carries out the reaction orotidine 5'-phosphate + H(+) = UMP + CO2. Its pathway is pyrimidine metabolism; UMP biosynthesis via de novo pathway; UMP from orotate: step 2/2. In terms of biological role, catalyzes the decarboxylation of orotidine 5'-monophosphate (OMP) to uridine 5'-monophosphate (UMP). The polypeptide is Orotidine 5'-phosphate decarboxylase (Wolbachia sp. subsp. Brugia malayi (strain TRS)).